Here is a 262-residue protein sequence, read N- to C-terminus: CD99 antigen-like protein 2 (262 aa).

The signal sequence occupies residues 1 to 25; the sequence is MVAWRSAFLVCLAFSLATLVQRGSG. The Extracellular segment spans residues 26-185; the sequence is DFDDFNLEDA…PGSGMVAEPG (160 aa). Residues 38–181 are disordered; the sequence is ETSSVKQPWD…SNDDPGSGMV (144 aa). Low complexity-rich tracts occupy residues 49 to 60 and 98 to 119; these read TTTTTTNRPGTT and VTTT…GNDF. 2 stretches are compositionally biased toward basic and acidic residues: residues 125-136 and 159-168; these read LDDRNDRDDGRR and YKPDKGKGDG. Ser-178 carries an O-linked (Xyl...) (chondroitin sulfate) serine glycan. A helical transmembrane segment spans residues 186–206; sequence TIAGVASALAMALIGAVSSYI. Residues 207-262 are Cytoplasmic-facing; it reads SYQQKKFCFSIQQGLNADYVKGENLEAVVCEEPQVKYSTLHTQSAEPPPPPEPARI.

It belongs to the CD99 family. In terms of processing, O-glycosylated. As to expression, detected in cerebrospinal fluid (at protein level). Expressed in many tissues, with low expression in thymus.

It localises to the cell membrane. The protein resides in the cell junction. It is found in the secreted. In terms of biological role, plays a role in a late step of leukocyte extravasation helping cells to overcome the endothelial basement membrane. Acts at the same site as, but independently of, PECAM1. Homophilic adhesion molecule, but these interactions may not be required for cell aggregation. This Homo sapiens (Human) protein is CD99 antigen-like protein 2 (CD99L2).